A 200-amino-acid chain; its full sequence is Recombination protein RecR (200 aa).

The segment at 58–75 (CPDCFCLKTSKTSSCDFC) adopts a C4-type zinc-finger fold. The Toprim domain maps to 82-177 (SFLCIVATPK…KISRLALGMP (96 aa)).

Belongs to the RecR family.

Its function is as follows. May play a role in DNA repair. It seems to be involved in an RecBC-independent recombinational process of DNA repair. It may act with RecF and RecO. This is Recombination protein RecR from Chlamydia muridarum (strain MoPn / Nigg).